The chain runs to 363 residues: Class I histocompatibility antigen, Gogo-B*0201 alpha chain (363 aa).

The N-terminal stretch at 1 to 24 (MQVTAPRTLLLLLSAALALTETWA) is a signal peptide. An alpha-1 region spans residues 25–114 (GSHSMRYFHT…LRGYYNQSED (90 aa)). Residues 25–308 (GSHSMRYFHT…EPSSQSTIPI (284 aa)) lie on the Extracellular side of the membrane. An N-linked (GlcNAc...) asparagine glycan is attached at N110. Residues 115 to 206 (GSHTIQRMYG…ENGKETLQRA (92 aa)) form an alpha-2 region. Intrachain disulfides connect C125–C188 and C227–C283. The alpha-3 stretch occupies residues 207–298 (DPPKTHVTHH…GLPEPLTLRW (92 aa)). Residues 209-297 (PKTHVTHHPI…EGLPEPLTLR (89 aa)) enclose the Ig-like C1-type domain. Positions 299-308 (EPSSQSTIPI) are connecting peptide. A helical transmembrane segment spans residues 309 to 333 (VGIVAGLAVLVVTVAVVAVVAAVMC). Over 334-363 (RRKSSGGKGGSYSQAASSDSAQGSDVSLTA) the chain is Cytoplasmic. The segment at 336–363 (KSSGGKGGSYSQAASSDSAQGSDVSLTA) is disordered. Residues 344–363 (SYSQAASSDSAQGSDVSLTA) are compositionally biased toward low complexity.

This sequence belongs to the MHC class I family. Heterodimer of an alpha chain and a beta chain (beta-2-microglobulin).

The protein resides in the membrane. Functionally, involved in the presentation of foreign antigens to the immune system. This is Class I histocompatibility antigen, Gogo-B*0201 alpha chain from Gorilla gorilla gorilla (Western lowland gorilla).